Here is a 324-residue protein sequence, read N- to C-terminus: Glyoxylate/hydroxypyruvate reductase B (324 aa).

Residues Arg237 and Glu266 contribute to the active site. The active-site Proton donor is the His285.

Belongs to the D-isomer specific 2-hydroxyacid dehydrogenase family. GhrB subfamily. Homodimer.

The protein resides in the cytoplasm. It carries out the reaction glycolate + NADP(+) = glyoxylate + NADPH + H(+). It catalyses the reaction (R)-glycerate + NAD(+) = 3-hydroxypyruvate + NADH + H(+). The catalysed reaction is (R)-glycerate + NADP(+) = 3-hydroxypyruvate + NADPH + H(+). Catalyzes the NADPH-dependent reduction of glyoxylate and hydroxypyruvate into glycolate and glycerate, respectively. This chain is Glyoxylate/hydroxypyruvate reductase B, found in Salmonella heidelberg (strain SL476).